The primary structure comprises 461 residues: Cysteine--tRNA ligase (461 aa).

C28 serves as a coordination point for Zn(2+). Positions 30-40 (ITVYDLCHIGH) match the 'HIGH' region motif. The Zn(2+) site is built by C209, H234, and E238. Positions 266–270 (KMSKS) match the 'KMSKS' region motif. K269 serves as a coordination point for ATP.

Belongs to the class-I aminoacyl-tRNA synthetase family. As to quaternary structure, monomer. It depends on Zn(2+) as a cofactor.

It is found in the cytoplasm. It carries out the reaction tRNA(Cys) + L-cysteine + ATP = L-cysteinyl-tRNA(Cys) + AMP + diphosphate. This chain is Cysteine--tRNA ligase, found in Escherichia coli (strain K12 / MC4100 / BW2952).